The chain runs to 497 residues: Endoglucanase 17 (497 aa).

The signal sequence occupies residues Met-1 to Gly-21. The active-site Nucleophile is Asp-77. Residue His-406 is part of the active site. N-linked (GlcNAc...) asparagine glycosylation is present at Asn-451. Active-site residues include Asp-458 and Glu-467.

It belongs to the glycosyl hydrolase 9 (cellulase E) family.

The protein localises to the secreted. The catalysed reaction is Endohydrolysis of (1-&gt;4)-beta-D-glucosidic linkages in cellulose, lichenin and cereal beta-D-glucans.. The chain is Endoglucanase 17 (GLU13) from Oryza sativa subsp. japonica (Rice).